The following is a 126-amino-acid chain: Antimicrobial protein 1 (126 aa).

A signal peptide spans 1–24 (MRSSLLLGLTVVLLLGVTVPPCMA).

In terms of tissue distribution, strongly expressed in gills, hemocytes and reproductive tract, with weaker expression in muscle, heart and digestive tract. Not detected in eyes and hepatopancreas (at protein level).

It is found in the secreted. Functionally, has antibacterial activity against the Gram-positive bacteria E.coli (MIC&lt;50 ug/ml) and P.aeruginosa (MIC&lt;25 ug/ml), and the Gram-negative bacteria S.aureus (MIC&lt;100 ug/ml) and S.pyogenes (MIC&lt;50 ug/ml). The polypeptide is Antimicrobial protein 1 (Scylla serrata (Mud crab)).